The primary structure comprises 313 residues: MNQYPAERIARARVLVVGDVMLDRYWFGEVDRISPEAPVPVVRVARREDRLGGAANVARNVAALGAQVTLIGVVGADEVGHRIERMAAEEGVRTDLVSDTEHPTTLKMRVLGRQQQLLRVDFEQHPEPAALDGISAAVARQLAQHDIVVLSDYAKGVLDRVESIIAAAVGHSLPVLVDPKGDHYERYRGATLVTPNRAEMREAVGRWKTEDELAERAQRLRLDLDLEALLVTRSEQGMTLFTDAGRDHADAAAHEVYDVSGAGDTVLATLAVMRAVGLSWGDAMRWANRAGGIVVGKLGTSVVTAAELAGEST.

196–199 provides a ligand contact to ATP; it reads NRAE. Aspartate 264 is a catalytic residue.

The enzyme catalyses D-glycero-beta-D-manno-heptose 7-phosphate + ATP = D-glycero-beta-D-manno-heptose 1,7-bisphosphate + ADP + H(+). It functions in the pathway nucleotide-sugar biosynthesis; ADP-L-glycero-beta-D-manno-heptose biosynthesis; ADP-L-glycero-beta-D-manno-heptose from D-glycero-beta-D-manno-heptose 7-phosphate: step 1/4. Its pathway is bacterial outer membrane biogenesis; LPS core biosynthesis. In terms of biological role, catalyzes the phosphorylation of D-glycero-D-manno-heptose 7-phosphate at the C-1 position to selectively form D-glycero-beta-D-manno-heptose-1,7-bisphosphate. This is D-beta-D-heptose 7-phosphate kinase (rfaE) from Bordetella bronchiseptica (strain ATCC BAA-588 / NCTC 13252 / RB50) (Alcaligenes bronchisepticus).